A 562-amino-acid chain; its full sequence is Bifunctional coenzyme A synthase (562 aa).

2 positions are modified to phosphoserine: Ser177 and Ser182. A phosphopantetheine adenylyltransferase region spans residues 179–357 (VARSAKQPVR…HKRPELPPGC (179 aa)). The 204-residue stretch at 359–562 (VIGLTGISGS…KRISEAPSDP (204 aa)) folds into the DPCK domain. Residue 364–371 (GISGSGKS) coordinates ATP.

The protein in the central section; belongs to the eukaryotic CoaD family. As to quaternary structure, monomer. The N-terminus is blocked.

It localises to the cytoplasm. It is found in the mitochondrion matrix. The enzyme catalyses (R)-4'-phosphopantetheine + ATP + H(+) = 3'-dephospho-CoA + diphosphate. The catalysed reaction is 3'-dephospho-CoA + ATP = ADP + CoA + H(+). Its pathway is cofactor biosynthesis; coenzyme A biosynthesis; CoA from (R)-pantothenate: step 4/5. It participates in cofactor biosynthesis; coenzyme A biosynthesis; CoA from (R)-pantothenate: step 5/5. In terms of biological role, bifunctional enzyme that catalyzes the fourth and fifth sequential steps of CoA biosynthetic pathway. The fourth reaction is catalyzed by the phosphopantetheine adenylyltransferase, coded by the coaD domain; the fifth reaction is catalyzed by the dephospho-CoA kinase, coded by the coaE domain. May act as a point of CoA biosynthesis regulation. The chain is Bifunctional coenzyme A synthase from Sus scrofa (Pig).